Here is a 419-residue protein sequence, read N- to C-terminus: Zinc finger CCCH domain-containing protein 62 (419 aa).

Residues 89 to 116 (SLRKWVCKYWKDGKCKRGEQCQFLHSWS) form a C3H1-type zinc finger. 5 WD repeats span residues 129 to 168 (GHNK…CVHS), 210 to 247 (GVVG…ESDP), 256 to 293 (GHSG…CIMT), 296 to 335 (QHTG…KVVQ), and 383 to 419 (FSTH…GNKV).

In Arabidopsis thaliana (Mouse-ear cress), this protein is Zinc finger CCCH domain-containing protein 62 (ZFWD4).